The following is a 339-amino-acid chain: Dihydroorotase (339 aa).

H12 and H14 together coordinate Zn(2+). Substrate is bound by residues 14 to 16 (HVR) and N40. The Zn(2+) site is built by K94, H133, H167, and D239. An N6-carboxylysine modification is found at K94. H133 contributes to the substrate binding site. Residue D239 is part of the active site. Substrate contacts are provided by H243 and A255.

It belongs to the metallo-dependent hydrolases superfamily. DHOase family. Class II DHOase subfamily. In terms of assembly, homodimer. Zn(2+) serves as cofactor.

The catalysed reaction is (S)-dihydroorotate + H2O = N-carbamoyl-L-aspartate + H(+). It functions in the pathway pyrimidine metabolism; UMP biosynthesis via de novo pathway; (S)-dihydroorotate from bicarbonate: step 3/3. Catalyzes the reversible cyclization of carbamoyl aspartate to dihydroorotate. This Helicobacter pylori (strain P12) protein is Dihydroorotase.